The sequence spans 208 residues: Urease accessory protein UreG 1 (208 aa).

A GTP-binding site is contributed by 14–21 (GPVGSGKT).

It belongs to the SIMIBI class G3E GTPase family. UreG subfamily. In terms of assembly, homodimer. UreD, UreF and UreG form a complex that acts as a GTP-hydrolysis-dependent molecular chaperone, activating the urease apoprotein by helping to assemble the nickel containing metallocenter of UreC. The UreE protein probably delivers the nickel.

It localises to the cytoplasm. Its function is as follows. Facilitates the functional incorporation of the urease nickel metallocenter. This process requires GTP hydrolysis, probably effectuated by UreG. Functionally, disruption of the ure1 gene cluster suggests that it protects brucellae during their passage through the stomach. The major route of infection in human brucellosis is oral. This is Urease accessory protein UreG 1 from Brucella abortus (strain 2308).